Here is a 46-residue protein sequence, read N- to C-terminus: Lariatin (46 aa).

Positions 1 to 26 (MTSQPSKKTYNAPSLVQRGKFARTTA) are excised as a propeptide. The isoglutamyl glycine isopeptide (Gly-Glu) cross-link spans 27–34 (GSQLVYRE).

Post-translationally, the linear precursor LarA is probably cleaved by the putative peptidase LarD, generating linear 18-residue Lariatin-A or 20-residue Lariatin-B. These linear peptides are probably cross-linked by LarB. Finally, lariatins A and B may be exported by ABC transporter LarE.

In terms of biological role, peptide antibiotic with selective activity against Mycobacterium species (M.smegmatis, MIC=3.13 ug/ml and M.tuberculosis, MIC=0.39 ug/ml). it is plausible that the target of lariatins lies within the cell wall in mycobacteria. Functionally, peptide antibiotic with selective activity against Mycobacterium species (M.smegmatis, MIC=6.25 ug/ml). This is Lariatin from Rhodococcus jostii.